We begin with the raw amino-acid sequence, 461 residues long: Phosphoenolpyruvate carboxylase (461 aa).

Belongs to the PEPCase type 2 family. In terms of assembly, homotetramer. The cofactor is Mg(2+).

The catalysed reaction is oxaloacetate + phosphate = phosphoenolpyruvate + hydrogencarbonate. In terms of biological role, catalyzes the irreversible beta-carboxylation of phosphoenolpyruvate (PEP) to form oxaloacetate (OAA), a four-carbon dicarboxylic acid source for the tricarboxylic acid cycle. The sequence is that of Phosphoenolpyruvate carboxylase from Pyrobaculum islandicum (strain DSM 4184 / JCM 9189 / GEO3).